Consider the following 622-residue polypeptide: Histone-arginine methyltransferase CARMER (622 aa).

In terms of domain architecture, SAM-dependent MTase PRMT-type spans Ala-118–Asp-425. S-adenosyl-L-methionine-binding residues include Gln-131, Arg-140, Gly-164, Glu-186, Glu-215, and Thr-243. An Asymmetric dimethylarginine; by autocatalysis modification is found at Arg-478. 2 disordered regions span residues Ala-513 to Gln-556 and Gln-602 to Tyr-622. The segment covering Gln-536–Gln-556 has biased composition (low complexity).

This sequence belongs to the class I-like SAM-binding methyltransferase superfamily. Protein arginine N-methyltransferase family. Homodimer. Post-translationally, the dimethylated protein is the major form.

Its subcellular location is the cytoplasm. It localises to the nucleus. It carries out the reaction L-arginyl-[protein] + 2 S-adenosyl-L-methionine = N(omega),N(omega)-dimethyl-L-arginyl-[protein] + 2 S-adenosyl-L-homocysteine + 2 H(+). Functionally, methylates (mono- and asymmetric dimethylation) the guanidino nitrogens of arginyl residues in proteins. May methylate histone H3 at 'Arg-17' and activate transcription via chromatin remodeling. This Anopheles gambiae (African malaria mosquito) protein is Histone-arginine methyltransferase CARMER.